The primary structure comprises 90 residues: DNA-directed RNA polymerase subunit omega (90 aa).

Belongs to the RNA polymerase subunit omega family. As to quaternary structure, the RNAP catalytic core consists of 2 alpha, 1 beta, 1 beta' and 1 omega subunit. When a sigma factor is associated with the core the holoenzyme is formed, which can initiate transcription.

The enzyme catalyses RNA(n) + a ribonucleoside 5'-triphosphate = RNA(n+1) + diphosphate. Its function is as follows. Promotes RNA polymerase assembly. Latches the N- and C-terminal regions of the beta' subunit thereby facilitating its interaction with the beta and alpha subunits. This is DNA-directed RNA polymerase subunit omega from Hamiltonella defensa subsp. Acyrthosiphon pisum (strain 5AT).